A 499-amino-acid chain; its full sequence is Cobyric acid synthase (499 aa).

Residues 246 to 441 enclose the GATase cobBQ-type domain; it reads PIDIAIIKLP…IHGIFDGAEL (196 aa). Cysteine 327 serves as the catalytic Nucleophile. Residue histidine 433 is part of the active site.

The protein belongs to the CobB/CobQ family. CobQ subfamily.

It functions in the pathway cofactor biosynthesis; adenosylcobalamin biosynthesis. In terms of biological role, catalyzes amidations at positions B, D, E, and G on adenosylcobyrinic A,C-diamide. NH(2) groups are provided by glutamine, and one molecule of ATP is hydrogenolyzed for each amidation. This chain is Cobyric acid synthase, found in Clostridium kluyveri (strain NBRC 12016).